Consider the following 312-residue polypeptide: Aspartate carbamoyltransferase catalytic subunit (312 aa).

2 residues coordinate carbamoyl phosphate: Arg-55 and Thr-56. Lys-83 contacts L-aspartate. The carbamoyl phosphate site is built by Arg-105, His-138, and Gln-141. L-aspartate contacts are provided by Arg-171 and Arg-225. Positions 266 and 267 each coordinate carbamoyl phosphate.

The protein belongs to the aspartate/ornithine carbamoyltransferase superfamily. ATCase family. In terms of assembly, heterododecamer (2C3:3R2) of six catalytic PyrB chains organized as two trimers (C3), and six regulatory PyrI chains organized as three dimers (R2).

The enzyme catalyses carbamoyl phosphate + L-aspartate = N-carbamoyl-L-aspartate + phosphate + H(+). It functions in the pathway pyrimidine metabolism; UMP biosynthesis via de novo pathway; (S)-dihydroorotate from bicarbonate: step 2/3. In terms of biological role, catalyzes the condensation of carbamoyl phosphate and aspartate to form carbamoyl aspartate and inorganic phosphate, the committed step in the de novo pyrimidine nucleotide biosynthesis pathway. The sequence is that of Aspartate carbamoyltransferase catalytic subunit from Corynebacterium glutamicum (strain ATCC 13032 / DSM 20300 / JCM 1318 / BCRC 11384 / CCUG 27702 / LMG 3730 / NBRC 12168 / NCIMB 10025 / NRRL B-2784 / 534).